The primary structure comprises 635 residues: Probable clathrin assembly protein At4g32285 (635 aa).

Residues 23-159 (VASNMAPDLE…ELALFERRGR (137 aa)) enclose the ENTH domain. The disordered stretch occupies residues 157-208 (RGRNGGGSSSSHQSNGDDGYNRSRDDFRSPPPRTYDYETGNGFGMPKRSRSF). The segment covering 165-174 (SSSHQSNGDD) has biased composition (low complexity). Residues 175-184 (GYNRSRDDFR) show a composition bias toward basic and acidic residues. Ser207 carries the phosphoserine modification. The residue at position 224 (Thr224) is a Phosphothreonine. Over residues 357-369 (AKRAKSPERKEIE) the composition is skewed to basic and acidic residues. Positions 357 to 412 (AKRAKSPERKEIEAPPAPAPPVEEPVDMNEIKALPPPENHTPPPPPAPEPKPQQPQ) are disordered. The segment covering 390–409 (LPPPENHTPPPPPAPEPKPQ) has biased composition (pro residues).

It localises to the membrane. The protein localises to the clathrin-coated pit. It is found in the golgi apparatus. The protein resides in the cytoplasmic vesicle. Its subcellular location is the clathrin-coated vesicle. This Arabidopsis thaliana (Mouse-ear cress) protein is Probable clathrin assembly protein At4g32285.